The following is a 282-amino-acid chain: Uracil-DNA glycosylase (282 aa).

The segment at 15–40 is disordered; that stretch reads SAASKRKSASNTENIPEKVPAGNENQ. The active-site Proton acceptor is the aspartate 123.

It belongs to the uracil-DNA glycosylase (UDG) superfamily. UNG family.

The protein resides in the mitochondrion. It localises to the nucleus. It catalyses the reaction Hydrolyzes single-stranded DNA or mismatched double-stranded DNA and polynucleotides, releasing free uracil.. Inhibited by UGI, a B.subtilis bacteriophage PBS2 peptide inhibitor. Functionally, excises uracil residues from the DNA which can arise as a result of misincorporation of dUMP residues by DNA polymerase or due to deamination of cytosine. This Caenorhabditis elegans protein is Uracil-DNA glycosylase.